The chain runs to 414 residues: Serine/threonine transporter SstT (414 aa).

9 helical membrane-spanning segments follow: residues 19 to 39, 55 to 75, 89 to 109, 148 to 168, 189 to 209, 223 to 243, 297 to 317, 323 to 343, and 363 to 383; these read IIVG…LEPV, FVKG…IAAI, IVML…LASF, ALAT…GIAL, IVHL…AATL, LLLV…PFIV, IPLG…VLTL, LGIP…AVCA, and LFGI…VIGV.

This sequence belongs to the dicarboxylate/amino acid:cation symporter (DAACS) (TC 2.A.23) family.

It localises to the cell inner membrane. The catalysed reaction is L-serine(in) + Na(+)(in) = L-serine(out) + Na(+)(out). The enzyme catalyses L-threonine(in) + Na(+)(in) = L-threonine(out) + Na(+)(out). In terms of biological role, involved in the import of serine and threonine into the cell, with the concomitant import of sodium (symport system). In Actinobacillus succinogenes (strain ATCC 55618 / DSM 22257 / CCUG 43843 / 130Z), this protein is Serine/threonine transporter SstT.